The sequence spans 441 residues: Bacteria-responsive protein 1 (441 aa).

The N-terminal stretch at M1–A18 is a signal peptide. Residue N20 is glycosylated (N-linked (GlcNAc...) asparagine). The GH18 domain occupies P25 to L441. A disulfide bridge connects residues C29 and C56. N225 carries an N-linked (GlcNAc...) asparagine glycan.

It belongs to the glycosyl hydrolase 18 family. IDGF subfamily. In terms of tissue distribution, salivary gland (at protein level).

It localises to the secreted. Its function is as follows. Promotes recruitment of host neutrophils at the bite site. Induces expression of IL1B and IL6 in the skin of the host. Functionally, (Microbial infection) Enhances Zika virus replication and exacerbates disease pathogenesis in the host. This Aedes aegypti (Yellowfever mosquito) protein is Bacteria-responsive protein 1.